A 287-amino-acid polypeptide reads, in one-letter code: Ribosomal RNA small subunit methyltransferase A (287 aa).

Residues asparagine 28, leucine 30, glycine 55, glutamate 77, aspartate 103, and asparagine 123 each contribute to the S-adenosyl-L-methionine site.

This sequence belongs to the class I-like SAM-binding methyltransferase superfamily. rRNA adenine N(6)-methyltransferase family. RsmA subfamily.

It localises to the cytoplasm. It carries out the reaction adenosine(1518)/adenosine(1519) in 16S rRNA + 4 S-adenosyl-L-methionine = N(6)-dimethyladenosine(1518)/N(6)-dimethyladenosine(1519) in 16S rRNA + 4 S-adenosyl-L-homocysteine + 4 H(+). Its function is as follows. Specifically dimethylates two adjacent adenosines (A1518 and A1519) in the loop of a conserved hairpin near the 3'-end of 16S rRNA in the 30S particle. May play a critical role in biogenesis of 30S subunits. This chain is Ribosomal RNA small subunit methyltransferase A, found in Rhodopseudomonas palustris (strain HaA2).